The sequence spans 44 residues: Metallothionein-4 (44 aa).

Belongs to the metallothionein superfamily. Type 5 family.

Its function is as follows. This protein binds cations of several transition elements. Thought to be involved in metal ion homeostasis. This Drosophila melanogaster (Fruit fly) protein is Metallothionein-4 (MtnD).